Consider the following 976-residue polypeptide: Mast/stem cell growth factor receptor Kit (976 aa).

A signal peptide spans 1–25 (MRGARGAWDFLCVLLLLLRVQTGSS). Residues 26–524 (QPSVSPGEPS…QIHPHTLFTP (499 aa)) are Extracellular-facing. 5 Ig-like C2-type domains span residues 27–112 (PSVS…VFVR), 121–205 (DRSL…LKVR), 212–308 (PVVS…LEVV), 317–410 (PMIN…VYVN), and 413–507 (PEIL…FNFA). A disulfide bridge links Cys-58 with Cys-97. Asn-130 and Asn-145 each carry an N-linked (GlcNAc...) asparagine glycan. Disulfide bonds link Cys-136-Cys-186, Cys-151-Cys-183, and Cys-233-Cys-290. N-linked (GlcNAc...) asparagine glycans are attached at residues Asn-283, Asn-293, Asn-300, Asn-320, Asn-352, Asn-367, Asn-463, and Asn-486. A disulfide bond links Cys-428 and Cys-491. Residues 525 to 545 (LLIGFVIVAGMMCIIVMILTY) form a helical membrane-spanning segment. Over 546 to 976 (KYLQKPMYEV…SQPLLVHDDV (431 aa)) the chain is Cytoplasmic. Phosphotyrosine; by autocatalysis is present on residues Tyr-547, Tyr-553, Tyr-568, and Tyr-570. Residue Tyr-568 coordinates Mg(2+). The tract at residues 568–570 (YVY) is important for interaction with phosphotyrosine-binding proteins. A Protein kinase domain is found at 589 to 937 (LSFGKTLGAG…ISESTNHIYS (349 aa)). Residues 596 to 603 (GAGAFGKV), Lys-623, and 671 to 677 (EYCCYGD) contribute to the ATP site. Phosphotyrosine; by autocatalysis is present on residues Tyr-703, Tyr-721, and Tyr-730. Phosphoserine; by PKC/PRKCA occurs at positions 741 and 746. Residue Asp-792 is the Proton acceptor of the active site. Arg-796 contacts ATP. Residues Asn-797 and Asp-810 each contribute to the Mg(2+) site. Ser-821 carries the phosphoserine modification. The residue at position 823 (Tyr-823) is a Phosphotyrosine; by autocatalysis. Ser-891 is modified (phosphoserine). 2 positions are modified to phosphotyrosine; by autocatalysis: Tyr-900 and Tyr-936. Ser-959 carries the post-translational modification Phosphoserine.

Belongs to the protein kinase superfamily. Tyr protein kinase family. CSF-1/PDGF receptor subfamily. As to quaternary structure, monomer in the absence of bound KITLG/SCF. Homodimer in the presence of bound KITLG/SCF, forming a heterotetramer with two KITLG/SCF molecules. Interacts (via phosphorylated tyrosine residues) with the adapter proteins GRB2 and GRB7 (via SH2 domain), and SH2B2/APS. Interacts (via C-terminus) with MPDZ (via the tenth PDZ domain). Interacts (via phosphorylated tyrosine residues) with PIK3R1 and PIK3 catalytic subunit. Interacts (via phosphorylated tyrosine) with CRK (isoform Crk-II), FYN, SHC1 and MATK/CHK (via SH2 domain). Interacts with LYN and FES/FPS. Interacts (via phosphorylated tyrosine residues) with the protein phosphatases PTPN6/SHP-1 (via SH2 domain), PTPN11/SHP-2 (via SH2 domain) and PTPRU. Interacts with PLCG1. Interacts with DOK1 and TEC. Interacts (KITLG/SCF-bound) with IL1RL1. Interacts with IL1RAP (independent of stimulation with KITLG/SCF). A mast cell-specific KITLG/SCF-induced interleukin-33 signaling complex contains IL1RL1, IL1RAP, KIT and MYD88. Post-translationally, ubiquitinated by SOCS6. KIT is rapidly ubiquitinated after autophosphorylation induced by KITLG/SCF binding, leading to internalization and degradation. In terms of processing, autophosphorylated on tyrosine residues. KITLG/SCF binding enhances autophosphorylation. Isoform 1 shows low levels of tyrosine phosphorylation in the absence of added KITLG/SCF (in vitro). Kinase activity is down-regulated by phosphorylation on serine residues by protein kinase C family members. Phosphorylation at Tyr-568 is required for interaction with PTPN11/SHP-2, CRK (isoform Crk-II) and members of the SRC tyrosine-protein kinase family. Phosphorylation at Tyr-570 is required for interaction with PTPN6/SHP-1. Phosphorylation at Tyr-703, Tyr-823 and Tyr-936 is important for interaction with GRB2. Phosphorylation at Tyr-721 is important for interaction with PIK3R1. Phosphorylation at Tyr-823 and Tyr-936 is important for interaction with GRB7. As to expression, in testis, detected in spermatogonia in the basal layer and in interstitial Leydig cells but not in Sertoli cells or spermatocytes inside the seminiferous tubules (at protein level). Expression is maintained in ejaculated spermatozoa (at protein level).

It localises to the cell membrane. The protein resides in the cytoplasm. The catalysed reaction is L-tyrosyl-[protein] + ATP = O-phospho-L-tyrosyl-[protein] + ADP + H(+). With respect to regulation, present in an inactive conformation in the absence of bound ligand. KITLG/SCF binding leads to dimerization and activation by autophosphorylation on tyrosine residues. Activity is down-regulated by PRKCA-mediated phosphorylation on serine residues. Inhibited by imatinib/STI-571 (Gleevec) and sunitinib; these compounds maintain the kinase in an inactive conformation. Functionally, tyrosine-protein kinase that acts as a cell-surface receptor for the cytokine KITLG/SCF and plays an essential role in the regulation of cell survival and proliferation, hematopoiesis, stem cell maintenance, gametogenesis, mast cell development, migration and function, and in melanogenesis. In response to KITLG/SCF binding, KIT can activate several signaling pathways. Phosphorylates PIK3R1, PLCG1, SH2B2/APS and CBL. Activates the AKT1 signaling pathway by phosphorylation of PIK3R1, the regulatory subunit of phosphatidylinositol 3-kinase. Activated KIT also transmits signals via GRB2 and activation of RAS, RAF1 and the MAP kinases MAPK1/ERK2 and/or MAPK3/ERK1. Promotes activation of STAT family members STAT1, STAT3, STAT5A and STAT5B. Activation of PLCG1 leads to the production of the cellular signaling molecules diacylglycerol and inositol 1,4,5-trisphosphate. KIT signaling is modulated by protein phosphatases, and by rapid internalization and degradation of the receptor. Activated KIT promotes phosphorylation of the protein phosphatases PTPN6/SHP-1 and PTPRU, and of the transcription factors STAT1, STAT3, STAT5A and STAT5B. Promotes phosphorylation of PIK3R1, CBL, CRK (isoform Crk-II), LYN, MAPK1/ERK2 and/or MAPK3/ERK1, PLCG1, SRC and SHC1. This chain is Mast/stem cell growth factor receptor Kit (KIT), found in Homo sapiens (Human).